The primary structure comprises 198 residues: Dual specificity protein phosphatase 14 (198 aa).

Residues 26 to 167 (GIAQITSSLF…LIDYERQLFG (142 aa)) form the Tyrosine-protein phosphatase domain. The active-site Phosphocysteine intermediate is the C111.

This sequence belongs to the protein-tyrosine phosphatase family. Non-receptor class dual specificity subfamily. As to quaternary structure, interacts with CD28.

The enzyme catalyses O-phospho-L-tyrosyl-[protein] + H2O = L-tyrosyl-[protein] + phosphate. It carries out the reaction O-phospho-L-seryl-[protein] + H2O = L-seryl-[protein] + phosphate. The catalysed reaction is O-phospho-L-threonyl-[protein] + H2O = L-threonyl-[protein] + phosphate. In terms of biological role, involved in the inactivation of MAP kinases. Dephosphorylates ERK, JNK and p38 MAP-kinases. Plays a negative role in TCR signaling by dephosphorylating MAP3K7 adapter TAB1 leading to its inactivation. The protein is Dual specificity protein phosphatase 14 (DUSP14) of Homo sapiens (Human).